The chain runs to 465 residues: Ribosome biogenesis protein YTM1 (465 aa).

A ubiquitin-like (UBL) domain region spans residues 18–99; that stretch reads ARLRFSTRDE…ETTLDVEYVR (82 aa). WD repeat units lie at residues 111 to 153, 160 to 198, 205 to 242, 277 to 317, 319 to 358, 364 to 404, and 427 to 465; these read LHDD…IHTS, GHQSAIKCVRFLSASQIVSSGIDRTVRLWKYTDQEKGIT, GHKGSVDSIAVHGNRILSASADHTVGFWSTKKSESPAV, GHTA…LVDT, TTSHSLLCAQHLPEHTLLAAGSAARHVTLIDPRASATTVS, GHTN…TDTD, and GDGVKVFDVCWDKKVGIVSVGEDKVIQINRGEGVVPKTA. Residues 235 to 272 are disordered; sequence KKSESPAVPQNLLPSSSARSSKRRKLNSSASTSQRGPL.

The protein belongs to the WD repeat WDR12/YTM1 family. As to quaternary structure, component of the NOP7 complex, composed of ERB1, NOP7 and YTM1. The complex is held together by ERB1, which interacts with NOP7 via its N-terminal domain and with YTM1 via a high-affinity interaction between the seven-bladed beta-propeller domains of the 2 proteins. The NOP7 complex associates with the 66S pre-ribosome. Interacts (via UBL domain) with MDN1 (via VWFA/MIDAS domain).

Its subcellular location is the nucleus. It is found in the nucleolus. The protein localises to the nucleoplasm. Component of the NOP7 complex, which is required for maturation of the 25S and 5.8S ribosomal RNAs and formation of the 60S ribosome. This Coccidioides immitis (strain RS) (Valley fever fungus) protein is Ribosome biogenesis protein YTM1.